A 232-amino-acid chain; its full sequence is MFKKLCAEFLGTCWLVLGGCGSAVLASAFPQVGIGLLGVSFAFGLTVLTMAYTVGGISGGHFNPAVSLGLAVAGRVPAASLVSYVIAQVAGAIIAAAVLYVIATGKADFQLGSFAANGYGEHSPGGYSLTAALVTEVVMTFFFLIIILGSTHRRVPAGFAPIAIGLALTLIHLVSIPVTNTSVNPARSTGQALFVGGWALSQLWLFWIAPLFGAAIAGIVWKSVGEEFRPVD.

2 helical membrane-spanning segments follow: residues 9 to 29 (FLGTCWLVLGGCGSAVLASAF) and 32 to 52 (VGIGLLGVSFAFGLTVLTMAY). The NPA 1 signature appears at 63-65 (NPA). Helical transmembrane passes span 82–102 (VSYVIAQVAGAIIAAAVLYVI), 129–149 (LTAALVTEVVMTFFFLIIILG), and 158–178 (GFAPIAIGLALTLIHLVSIPV). An NPA 2 motif is present at residues 184-186 (NPA). Residues 200-220 (LSQLWLFWIAPLFGAAIAGIV) form a helical membrane-spanning segment.

The protein belongs to the MIP/aquaporin (TC 1.A.8) family. As to quaternary structure, homotetramer.

It localises to the cell inner membrane. The enzyme catalyses H2O(in) = H2O(out). In terms of biological role, channel that permits osmotically driven movement of water in both directions. It is involved in the osmoregulation and in the maintenance of cell turgor during volume expansion in rapidly growing cells. It mediates rapid entry or exit of water in response to abrupt changes in osmolarity. This chain is Aquaporin Z 2, found in Rhizobium meliloti (strain 1021) (Ensifer meliloti).